The sequence spans 243 residues: Carboxy-S-adenosyl-L-methionine synthase (243 aa).

S-adenosyl-L-methionine-binding positions include Y35, 68–70 (GCS), 92–93 (DN), and R199.

It belongs to the class I-like SAM-binding methyltransferase superfamily. Cx-SAM synthase family. In terms of assembly, homodimer.

The enzyme catalyses prephenate + S-adenosyl-L-methionine = carboxy-S-adenosyl-L-methionine + 3-phenylpyruvate + H2O. In terms of biological role, catalyzes the conversion of S-adenosyl-L-methionine (SAM) to carboxy-S-adenosyl-L-methionine (Cx-SAM). In Helicobacter pylori (strain ATCC 700392 / 26695) (Campylobacter pylori), this protein is Carboxy-S-adenosyl-L-methionine synthase.